The primary structure comprises 226 residues: 7-cyano-7-deazaguanine synthase (226 aa).

Residue 9-19 participates in ATP binding; the sequence is LSGGLDSTVAT. Zn(2+)-binding residues include Cys-192, Cys-200, Cys-203, and Cys-206.

Belongs to the QueC family. Zn(2+) is required as a cofactor.

It catalyses the reaction 7-carboxy-7-deazaguanine + NH4(+) + ATP = 7-cyano-7-deazaguanine + ADP + phosphate + H2O + H(+). The protein operates within purine metabolism; 7-cyano-7-deazaguanine biosynthesis. Functionally, catalyzes the ATP-dependent conversion of 7-carboxy-7-deazaguanine (CDG) to 7-cyano-7-deazaguanine (preQ(0)). This Methanosphaera stadtmanae (strain ATCC 43021 / DSM 3091 / JCM 11832 / MCB-3) protein is 7-cyano-7-deazaguanine synthase.